A 384-amino-acid polypeptide reads, in one-letter code: 8-amino-7-oxononanoate synthase (384 aa).

Residue R21 coordinates substrate. 108 to 109 is a binding site for pyridoxal 5'-phosphate; the sequence is GF. A substrate-binding site is contributed by H133. Pyridoxal 5'-phosphate-binding residues include S179, H207, and T233. At K236 the chain carries N6-(pyridoxal phosphate)lysine. Residue T352 participates in substrate binding.

This sequence belongs to the class-II pyridoxal-phosphate-dependent aminotransferase family. BioF subfamily. As to quaternary structure, homodimer. Requires pyridoxal 5'-phosphate as cofactor.

It carries out the reaction 6-carboxyhexanoyl-[ACP] + L-alanine + H(+) = (8S)-8-amino-7-oxononanoate + holo-[ACP] + CO2. Its pathway is cofactor biosynthesis; biotin biosynthesis. Catalyzes the decarboxylative condensation of pimeloyl-[acyl-carrier protein] and L-alanine to produce 8-amino-7-oxononanoate (AON), [acyl-carrier protein], and carbon dioxide. This chain is 8-amino-7-oxononanoate synthase, found in Escherichia coli (strain UTI89 / UPEC).